Consider the following 392-residue polypeptide: Tryptophan synthase beta chain (392 aa).

N6-(pyridoxal phosphate)lysine is present on Lys-84.

This sequence belongs to the TrpB family. As to quaternary structure, tetramer of two alpha and two beta chains. Pyridoxal 5'-phosphate serves as cofactor.

It carries out the reaction (1S,2R)-1-C-(indol-3-yl)glycerol 3-phosphate + L-serine = D-glyceraldehyde 3-phosphate + L-tryptophan + H2O. Its pathway is amino-acid biosynthesis; L-tryptophan biosynthesis; L-tryptophan from chorismate: step 5/5. In terms of biological role, the beta subunit is responsible for the synthesis of L-tryptophan from indole and L-serine. The polypeptide is Tryptophan synthase beta chain (Campylobacter jejuni subsp. jejuni serotype O:6 (strain 81116 / NCTC 11828)).